The primary structure comprises 120 residues: MLKEFKEFALKGNVLDLAIAVVMGAAFNKIISSLVENIIMPLIGKIFGSVDFAKEWSFWGIKYGLFIQSVIDFIIIAFALFIFVKIANTLMKKEEAEEEAVVEENVVLLTEIRDLLREKK.

2 helical membrane-spanning segments follow: residues 7-27 and 64-84; these read EFAL…GAAF and GLFI…FIFV.

The protein belongs to the MscL family. In terms of assembly, homopentamer.

The protein resides in the cell membrane. Its function is as follows. Channel that opens in response to stretch forces in the membrane lipid bilayer. May participate in the regulation of osmotic pressure changes within the cell. The protein is Large-conductance mechanosensitive channel of Staphylococcus aureus (strain Mu3 / ATCC 700698).